We begin with the raw amino-acid sequence, 161 residues long: SsrA-binding protein (161 aa).

The segment at 137–161 (HDKRTDSKEKDWNRDKARIMKSSLR) is disordered. The segment covering 139–154 (KRTDSKEKDWNRDKAR) has biased composition (basic and acidic residues).

The protein belongs to the SmpB family.

The protein localises to the cytoplasm. Required for rescue of stalled ribosomes mediated by trans-translation. Binds to transfer-messenger RNA (tmRNA), required for stable association of tmRNA with ribosomes. tmRNA and SmpB together mimic tRNA shape, replacing the anticodon stem-loop with SmpB. tmRNA is encoded by the ssrA gene; the 2 termini fold to resemble tRNA(Ala) and it encodes a 'tag peptide', a short internal open reading frame. During trans-translation Ala-aminoacylated tmRNA acts like a tRNA, entering the A-site of stalled ribosomes, displacing the stalled mRNA. The ribosome then switches to translate the ORF on the tmRNA; the nascent peptide is terminated with the 'tag peptide' encoded by the tmRNA and targeted for degradation. The ribosome is freed to recommence translation, which seems to be the essential function of trans-translation. The chain is SsrA-binding protein from Aliivibrio salmonicida (strain LFI1238) (Vibrio salmonicida (strain LFI1238)).